A 500-amino-acid polypeptide reads, in one-letter code: Cytochrome P450 monooxygenase ausR (500 aa).

A helical membrane pass occupies residues 15–35; it reads GVGLYILWTVAVLFVIFKLLA. Residue Cys439 participates in heme binding.

This sequence belongs to the cytochrome P450 family. Heme serves as cofactor.

It is found in the membrane. It participates in secondary metabolite biosynthesis; terpenoid biosynthesis. Its function is as follows. Cytochrome P450 monooxygenase; part of the gene cluster that mediates the biosynthesis of calidodehydroaustin, a fungal meroterpenoid. The first step of the pathway is the synthesis of 3,5-dimethylorsellinic acid by the polyketide synthase ausA. 3,5-dimethylorsellinic acid is then prenylated by the polyprenyl transferase ausN. Further epoxidation by the FAD-dependent monooxygenase ausM and cyclization by the probable terpene cyclase ausL lead to the formation of protoaustinoid A. Protoaustinoid A is then oxidized to spiro-lactone preaustinoid A3 by the combined action of the FAD-binding monooxygenases ausB and ausC, and the dioxygenase ausE. Acid-catalyzed keto-rearrangement and ring contraction of the tetraketide portion of preaustinoid A3 by ausJ lead to the formation of preaustinoid A4. The aldo-keto reductase ausK, with the help of ausH, is involved in the next step by transforming preaustinoid A4 into isoaustinone which is in turn hydroxylated by the P450 monooxygenase ausI to form austinolide. The cytochrome P450 monooxygenase ausG modifies austinolide to austinol. Austinol is further acetylated to austin by the O-acetyltransferase ausP, which spontaneously changes to dehydroaustin. The cytochrome P450 monooxygenase ausR then converts dehydroaustin is into 7-dehydrodehydroaustin. The hydroxylation catalyzed by ausR permits the O-acetyltransferase ausQ to add an additional acetyl group to the molecule, leading to the formation of acetoxydehydroaustin. The short chain dehydrogenase ausT catalyzes the reduction of the double bond present between carbon atoms 1 and 2 to convert 7-dehydrodehydroaustin into 1,2-dihydro-7-hydroxydehydroaustin. AusQ catalyzes not only an acetylation reaction but also the addition of the PKS ausV diketide product to 1,2-dihydro-7-hydroxydehydroaustin, forming precalidodehydroaustin. Finally, the iron/alpha-ketoglutarate-dependent dioxygenase converts precalidodehydroaustin into calidodehydroaustin. The sequence is that of Cytochrome P450 monooxygenase ausR from Aspergillus calidoustus.